Here is a 266-residue protein sequence, read N- to C-terminus: ATP synthase subunit a (266 aa).

Helical transmembrane passes span 33–53 (FWTL…LFLA), 95–115 (VIAP…LMDL), 141–161 (DVNI…FYSI), 206–226 (LFGN…LLPW), and 237–257 (AIFH…LTIV).

Belongs to the ATPase A chain family. F-type ATPases have 2 components, CF(1) - the catalytic core - and CF(0) - the membrane proton channel. CF(1) has five subunits: alpha(3), beta(3), gamma(1), delta(1), epsilon(1). CF(0) has three main subunits: a(1), b(2) and c(9-12). The alpha and beta chains form an alternating ring which encloses part of the gamma chain. CF(1) is attached to CF(0) by a central stalk formed by the gamma and epsilon chains, while a peripheral stalk is formed by the delta and b chains.

The protein resides in the cell inner membrane. Its function is as follows. Key component of the proton channel; it plays a direct role in the translocation of protons across the membrane. The chain is ATP synthase subunit a from Klebsiella pneumoniae subsp. pneumoniae (strain ATCC 700721 / MGH 78578).